A 291-amino-acid polypeptide reads, in one-letter code: GTPase Era (291 aa).

The 166-residue stretch at 2-167 (KSGFVSIIGR…LDEIVKYLDE (166 aa)) folds into the Era-type G domain. A G1 region spans residues 10–17 (GRTNAGKS). Residue 10-17 (GRTNAGKS) participates in GTP binding. The tract at residues 36–40 (NATRR) is G2. Residues 57–60 (DTPG) form a G3 region. Residues 57 to 61 (DTPGL) and 116 to 119 (NKVD) each bind GTP. The interval 116 to 119 (NKVD) is G4. Residues 146–148 (YSS) form a G5 region. The region spanning 186-274 (YRDFILESIY…LLKLFVTVKK (89 aa)) is the KH type-2 domain.

This sequence belongs to the TRAFAC class TrmE-Era-EngA-EngB-Septin-like GTPase superfamily. Era GTPase family. In terms of assembly, monomer.

The protein resides in the cytoplasm. It is found in the cell inner membrane. In terms of biological role, an essential GTPase that binds both GDP and GTP, with rapid nucleotide exchange. Plays a role in 16S rRNA processing and 30S ribosomal subunit biogenesis and possibly also in cell cycle regulation and energy metabolism. This chain is GTPase Era, found in Campylobacter jejuni (strain RM1221).